Reading from the N-terminus, the 638-residue chain is Ubiquitin-associated and SH3 domain-containing protein B (638 aa).

Serine 9 is modified (phosphoserine). Threonine 12 bears the Phosphothreonine mark. Positions 23 to 65 (TVKHGSALDVLLSMGFPRARAQKALASTGGRSVQAACDWLFSH) constitute a UBA domain. The region spanning 243 to 308 (ANHETLQVIY…PENYITKADE (66 aa)) is the SH3 domain. Positions 369 to 638 (GPQKRCLFVC…FNWRETLLQE (270 aa)) are protein tyrosine phosphatase. Arginine 379 is an active-site residue. Histidine 380 (tele-phosphohistidine intermediate) is an active-site residue. Histidine 565 is a catalytic residue.

As to quaternary structure, homodimer. Interacts with JAK2 (in vitro). Interacts with CBL. Part of a complex containing CBL and activated EGFR. Interacts with ubiquitin and with mono-ubiquitinated proteins. Interacts with ZAP70 (ubiquitinated form). Detected in splenic T-cells and B-cells, total spleen, skeletal muscle, heart, lung, kidney, thymus, brain and liver (at protein level). Highly expressed in brain. Detected in heart, spleen, lung, liver, kidney and testis.

The protein resides in the cytoplasm. The protein localises to the nucleus. It carries out the reaction O-phospho-L-tyrosyl-[protein] + H2O = L-tyrosyl-[protein] + phosphate. Functionally, interferes with CBL-mediated down-regulation and degradation of receptor-type tyrosine kinases. Promotes accumulation of activated target receptors, such as T-cell receptors and EGFR, on the cell surface. Exhibits tyrosine phosphatase activity toward several substrates including EGFR, FAK, SYK, and ZAP70. Down-regulates proteins that are dually modified by both protein tyrosine phosphorylation and ubiquitination. The protein is Ubiquitin-associated and SH3 domain-containing protein B (Ubash3b) of Mus musculus (Mouse).